Consider the following 545-residue polypeptide: E3 ubiquitin-protein ligase ipaH9.8 (545 aa).

Residues 1–242 (MLPINNNFSL…YHGPRIYFSM (242 aa)) are interaction with target proteins. LRR repeat units follow at residues 57–77 (NSDELRLDRLNLSSLPDNLPA), 78–99 (QITLLNVSYNQLTNLPELPVTL), 100–117 (KKLYSASNKLSELPVLPP), 118–139 (ALESLQVQHNELENLPALPDSL), 140–157 (LTMNISYNEIVSLPSLPQ), 158–179 (ALKNLRATRNFLTELPAFSEGN), 182–203 (VVREYFFDRNQISHIPESILNL), and 205–228 (NECSIHISDNPLSSHALQALQRLT). A linker region spans residues 243–250 (SDGQQNTL). The interval 251 to 545 (HRPLADAVTA…SENGSQLHHS (295 aa)) is E3 ubiquitin-protein ligase catalytic domain. The NEL domain maps to 253 to 545 (PLADAVTAWF…SENGSQLHHS (293 aa)). The active-site Glycyl thioester intermediate is Cys-337.

Belongs to the LRR-containing bacterial E3 ligase family. In terms of assembly, also interacts with human and mouse U2AF1 (U2AF35). In terms of processing, ubiquitinated in the presence of host E1 ubiquitin-activating enzyme, E2 ubiquitin-conjugating enzyme and ubiquitin.

It is found in the secreted. Its subcellular location is the host cytoplasm. The protein localises to the host nucleus. It carries out the reaction S-ubiquitinyl-[E2 ubiquitin-conjugating enzyme]-L-cysteine + [acceptor protein]-L-lysine = [E2 ubiquitin-conjugating enzyme]-L-cysteine + N(6)-ubiquitinyl-[acceptor protein]-L-lysine.. Its activity is regulated as follows. Exists in an autoinhibited state in the absence of substrate protein, due to interactions of the leucine-rich repeats with NEL domain. Is activated upon binding to a substrate protein. Effector E3 ubiquitin ligase that interferes with host's ubiquitination pathway and modulates the acute inflammatory responses, thus facilitating bacterial colonization within the host cell. Interacts with IKBKG (NEMO) and TNIP1 (ABIN-1), a ubiquitin-binding adapter protein, which results in TNIP1-dependent 'Lys-27'-linked polyubiquitination of IKBKG. Consequently, polyubiquitinated IKBKG undergoes proteasome-dependent degradation, which perturbs NF-kappa-B activation during bacterial infection. Mediates polyubiquitination of host U2AF1, leading to its proteasomal degradation. Catalyzes 'Lys-48'-linked polyubiquitination and subsequent degradation of a subset of host guanylate-binding proteins (GBP1, GBP2, GBP4 and GBP6), thereby suppressing host cell defense. In contrast, host GBP3 and GBP7 are not ubiquitinated by IpaH9.8. Uses UBE2D2 (UBCH5B) as an E2 ubiquitin-conjugating enzyme. The polypeptide is E3 ubiquitin-protein ligase ipaH9.8 (ipaH9.8) (Shigella sonnei (strain Ss046)).